A 468-amino-acid polypeptide reads, in one-letter code: Probable Xaa-Pro aminopeptidase PEPP (468 aa).

4 residues coordinate Mn(2+): Asp264, Asp275, Glu398, and Glu438.

The protein belongs to the peptidase M24B family. Mn(2+) serves as cofactor.

It catalyses the reaction Release of any N-terminal amino acid, including proline, that is linked to proline, even from a dipeptide or tripeptide.. In terms of biological role, catalyzes the removal of a penultimate prolyl residue from the N-termini of peptides. The chain is Probable Xaa-Pro aminopeptidase PEPP (PEPP) from Paracoccidioides brasiliensis (strain Pb18).